A 328-amino-acid polypeptide reads, in one-letter code: tRNA uridine(34) hydroxylase (328 aa).

The Rhodanese domain occupies 130 to 224 (LDEDTVVLDT…YGKDPEVQGE (95 aa)). Residue C184 is the Cysteine persulfide intermediate of the active site.

This sequence belongs to the TrhO family.

The catalysed reaction is uridine(34) in tRNA + AH2 + O2 = 5-hydroxyuridine(34) in tRNA + A + H2O. Its function is as follows. Catalyzes oxygen-dependent 5-hydroxyuridine (ho5U) modification at position 34 in tRNAs. The polypeptide is tRNA uridine(34) hydroxylase (Streptococcus pyogenes serotype M49 (strain NZ131)).